A 307-amino-acid chain; its full sequence is MAVVTMRQLLESGVHFGHQTRRWNPKMKRFIMTERNGIYIIDLQQSLAYIDRSYAFVKETVAKGGTIMFVGTKKQAQEAIAEQATRVGMPYVNQRWLGGMLTNFSTVHQRINRLKELDEIDFDDVAGSSRTKKELLQMRRERDKLNKSLGGIREMTRTPSAVWIVDTNKEHLAVEEARKLRIPIIGILDSNCDPDLVDFPIPGNDDAIRAVGLLTRVVADAVAEGLIARSGVKAGEGAEAVGAEEPLAEWERELLGGEAEQAAVDATGGAATEETPAAESTGAASEAAAVSEAAEPATEQPAADAEA.

Residues 256–307 (GGEAEQAAVDATGGAATEETPAAESTGAASEAAAVSEAAEPATEQPAADAEA) form a disordered region. Residues 259 to 307 (AEQAAVDATGGAATEETPAAESTGAASEAAAVSEAAEPATEQPAADAEA) are compositionally biased toward low complexity.

The protein belongs to the universal ribosomal protein uS2 family.

In Nocardioides sp. (strain ATCC BAA-499 / JS614), this protein is Small ribosomal subunit protein uS2.